The following is a 268-amino-acid chain: L-gamma-glutamyl-L-propargylglycine hydroxylase (268 aa).

It depends on Fe(2+) as a cofactor.

The catalysed reaction is L-gamma-glutamyl-L-propargylglycine + 2-oxoglutarate + O2 = L-gamma-glutamyl-(3R)-L-beta-ethynylserine + succinate + CO2. The protein operates within amino-acid metabolism. It functions in the pathway antibiotic biosynthesis. Functionally, involved in the biosynthesis of terminal alkyne-containing amino acids such as L-beta-ethynylserine, that are produced as antibiotics by S.cattleya. Catalyzes the hydroxylation of the dipeptide L-gamma-glutamyl-L-propargylglycine, leading to L-gamma-glutamyl-L-beta-ethynylserine. Cannot use L-propargylglycine as substrate. This is L-gamma-glutamyl-L-propargylglycine hydroxylase from Streptantibioticus cattleyicolor (strain ATCC 35852 / DSM 46488 / JCM 4925 / NBRC 14057 / NRRL 8057) (Streptomyces cattleya).